We begin with the raw amino-acid sequence, 309 residues long: tRNA uridine(34) hydroxylase (309 aa).

One can recognise a Rhodanese domain in the interval 126 to 220 (SDPEVIVIDT…YLEQIPPEES (95 aa)). Cys180 acts as the Cysteine persulfide intermediate in catalysis.

This sequence belongs to the TrhO family.

The catalysed reaction is uridine(34) in tRNA + AH2 + O2 = 5-hydroxyuridine(34) in tRNA + A + H2O. Its function is as follows. Catalyzes oxygen-dependent 5-hydroxyuridine (ho5U) modification at position 34 in tRNAs. The chain is tRNA uridine(34) hydroxylase from Nostoc sp. (strain PCC 7120 / SAG 25.82 / UTEX 2576).